The chain runs to 370 residues: Anthranilate phosphoribosyltransferase (370 aa).

Residues Gly-82, 85–86 (GD), Thr-90, 92–95 (NVST), 110–118 (KHGNRAATS), and Ser-122 contribute to the 5-phospho-alpha-D-ribose 1-diphosphate site. Gly-82 lines the anthranilate pocket. Ser-94 lines the Mg(2+) pocket. An anthranilate-binding site is contributed by Asn-113. Arg-168 lines the anthranilate pocket. Positions 226 and 227 each coordinate Mg(2+).

It belongs to the anthranilate phosphoribosyltransferase family. Homodimer. Requires Mg(2+) as cofactor.

It catalyses the reaction N-(5-phospho-beta-D-ribosyl)anthranilate + diphosphate = 5-phospho-alpha-D-ribose 1-diphosphate + anthranilate. It functions in the pathway amino-acid biosynthesis; L-tryptophan biosynthesis; L-tryptophan from chorismate: step 2/5. Its function is as follows. Catalyzes the transfer of the phosphoribosyl group of 5-phosphorylribose-1-pyrophosphate (PRPP) to anthranilate to yield N-(5'-phosphoribosyl)-anthranilate (PRA). This chain is Anthranilate phosphoribosyltransferase, found in Methanosarcina acetivorans (strain ATCC 35395 / DSM 2834 / JCM 12185 / C2A).